The chain runs to 193 residues: MIKLVFRYSPTKTVDGFNELAFGLGDGLPWGRVKKDLQNFKARTEGTIMIMGAKTFQSLPTLLPGRSHIVVCDLARDYPVTKDGDLAHFYITWEQYITYISGGEIQVSSPNAPFETMLDQNSKVSVIGGPALLYAALPYADEVVVSRIVKRHRVNSTVQLDASFLDDISKREMVETHWYKIDEVTTLTESVYK.

Positions 1-193 constitute a DHFR domain; it reads MIKLVFRYSP…VTTLTESVYK (193 aa). NADP(+)-binding positions include arginine 7, 22-27, 52-55, and 73-77; these read FGLGDG, GAKT, and DLARD.

The protein belongs to the dihydrofolate reductase family.

The catalysed reaction is (6S)-5,6,7,8-tetrahydrofolate + NADP(+) = 7,8-dihydrofolate + NADPH + H(+). It participates in cofactor biosynthesis; tetrahydrofolate biosynthesis; 5,6,7,8-tetrahydrofolate from 7,8-dihydrofolate: step 1/1. Functionally, key enzyme in folate metabolism. Catalyzes an essential reaction for de novo glycine and purine synthesis, and for DNA precursor synthesis. The protein is Dihydrofolate reductase (frd) of Escherichia coli (Bacteriophage T4).